A 159-amino-acid polypeptide reads, in one-letter code: MEQSHQNLQSQFFIEHILQILPHRYPMLLVDRIIELQANKKIAAYKNITFNEDVFNGHFPNKPIFPGVLIVEGMAQSGGFLAFTSLWGFDPEIAKTKIVYFMTIDKVKFRIPVTPGDRLEYHLEVLKHKGMIWQVGGTAQVDGKVVAEAELKAMIAERE.

The active site involves His58.

Belongs to the thioester dehydratase family. FabZ subfamily.

It localises to the cytoplasm. The enzyme catalyses a (3R)-hydroxyacyl-[ACP] = a (2E)-enoyl-[ACP] + H2O. Its function is as follows. Involved in unsaturated fatty acids biosynthesis. Catalyzes the dehydration of short chain beta-hydroxyacyl-ACPs and long chain saturated and unsaturated beta-hydroxyacyl-ACPs. The sequence is that of 3-hydroxyacyl-[acyl-carrier-protein] dehydratase FabZ from Helicobacter pylori (strain HPAG1).